Consider the following 392-residue polypeptide: Imidazolonepropionase (392 aa).

Fe(3+) is bound by residues H70 and H72. The Zn(2+) site is built by H70 and H72. Positions 79, 137, and 164 each coordinate 4-imidazolone-5-propanoate. Residue Y137 participates in N-formimidoyl-L-glutamate binding. Position 227 (H227) interacts with Fe(3+). H227 is a Zn(2+) binding site. Q230 provides a ligand contact to 4-imidazolone-5-propanoate. D301 is a binding site for Fe(3+). Zn(2+) is bound at residue D301. The N-formimidoyl-L-glutamate site is built by N303 and G305. T306 is a binding site for 4-imidazolone-5-propanoate.

This sequence belongs to the metallo-dependent hydrolases superfamily. HutI family. The cofactor is Zn(2+). It depends on Fe(3+) as a cofactor.

Its subcellular location is the cytoplasm. The catalysed reaction is 4-imidazolone-5-propanoate + H2O = N-formimidoyl-L-glutamate. The protein operates within amino-acid degradation; L-histidine degradation into L-glutamate; N-formimidoyl-L-glutamate from L-histidine: step 3/3. In terms of biological role, catalyzes the hydrolytic cleavage of the carbon-nitrogen bond in imidazolone-5-propanoate to yield N-formimidoyl-L-glutamate. It is the third step in the universal histidine degradation pathway. The sequence is that of Imidazolonepropionase from Nocardia farcinica (strain IFM 10152).